A 467-amino-acid polypeptide reads, in one-letter code: Actinorhodin polyketide putative beta-ketoacyl synthase 1 (467 aa).

The tract at residues 1–35 is disordered; sequence MPLDAAPVDPASRGPVSAFEPPSSHGADDDDDHRT. The Ketosynthase family 3 (KS3) domain occupies 45–459; the sequence is KRRVVITGVG…GFQSAMVLRD (415 aa). Residues Cys-212, His-352, and His-389 each act as for beta-ketoacyl synthase activity in the active site.

It belongs to the thiolase-like superfamily. Beta-ketoacyl-ACP synthases family.

The protein operates within antibiotic biosynthesis; actinorhodin biosynthesis. The sequence is that of Actinorhodin polyketide putative beta-ketoacyl synthase 1 from Streptomyces coelicolor (strain ATCC BAA-471 / A3(2) / M145).